Reading from the N-terminus, the 592-residue chain is V-type ATP synthase alpha chain (592 aa).

232–239 (GPFGSGKT) serves as a coordination point for ATP.

The protein belongs to the ATPase alpha/beta chains family.

It catalyses the reaction ATP + H2O + 4 H(+)(in) = ADP + phosphate + 5 H(+)(out). In terms of biological role, produces ATP from ADP in the presence of a proton gradient across the membrane. The V-type alpha chain is a catalytic subunit. This Clostridioides difficile (strain 630) (Peptoclostridium difficile) protein is V-type ATP synthase alpha chain.